The following is a 125-amino-acid chain: Large ribosomal subunit protein bL12 (125 aa).

The protein belongs to the bacterial ribosomal protein bL12 family. Homodimer. Part of the ribosomal stalk of the 50S ribosomal subunit. Forms a multimeric L10(L12)X complex, where L10 forms an elongated spine to which 2 to 4 L12 dimers bind in a sequential fashion. Binds GTP-bound translation factors.

In terms of biological role, forms part of the ribosomal stalk which helps the ribosome interact with GTP-bound translation factors. Is thus essential for accurate translation. This chain is Large ribosomal subunit protein bL12, found in Paraburkholderia phymatum (strain DSM 17167 / CIP 108236 / LMG 21445 / STM815) (Burkholderia phymatum).